The chain runs to 195 residues: Ephrin-A2 (195 aa).

The signal sequence occupies residues 1 to 16; it reads MELSLVVFTVVCWVSV. The Ephrin RBD domain maps to 24-157; it reads SDRHAVYWNS…KLKVYVKPTS (134 aa). The N-linked (GlcNAc...) asparagine glycan is linked to N32. Disulfide bonds link C57–C97 and C85–C146. The GPI-anchor amidated cysteine moiety is linked to residue C174. Positions 175–195 are cleaved as a propeptide — removed in mature form; the sequence is GADGPCLAVLMLLLVFLLAGV.

This sequence belongs to the ephrin family. In terms of assembly, binds to the receptor tyrosine kinases epha2, epha3, epha4 and epha5. Interacts with epha8; activates epha8. As to expression, widespread expression in the embryo.

It localises to the cell membrane. Cell surface GPI-bound ligand for Eph receptors, a family of receptor tyrosine kinases which are crucial for migration, repulsion and adhesion during neuronal, vascular and epithelial development. Binds promiscuously Eph receptors residing on adjacent cells, leading to contact-dependent bidirectional signaling into neighboring cells. The signaling pathway downstream of the receptor is referred to as forward signaling while the signaling pathway downstream of the ephrin ligand is referred to as reverse signaling. With the epha2 receptor may play a role in bone remodeling through regulation of osteoclastogenesis and osteoblastogenesis. The sequence is that of Ephrin-A2 (efna2) from Danio rerio (Zebrafish).